Consider the following 62-residue polypeptide: DNA-binding protein 7 (62 aa).

This sequence belongs to the 7 kDa DNA-binding/endoribonuclease P2 family. Monomer.

It localises to the cytoplasm. Functionally, can constrain negative DNA supercoils. May be involved in maintaining the integrity of the genome at high temperature. This Metallosphaera cuprina (strain Ar-4) protein is DNA-binding protein 7.